A 228-amino-acid chain; its full sequence is Uracil-DNA glycosylase (228 aa).

Residue aspartate 64 is the Proton acceptor of the active site.

The protein belongs to the uracil-DNA glycosylase (UDG) superfamily. UNG family.

It localises to the cytoplasm. The catalysed reaction is Hydrolyzes single-stranded DNA or mismatched double-stranded DNA and polynucleotides, releasing free uracil.. Excises uracil residues from the DNA which can arise as a result of misincorporation of dUMP residues by DNA polymerase or due to deamination of cytosine. This Yersinia pseudotuberculosis serotype IB (strain PB1/+) protein is Uracil-DNA glycosylase.